Here is a 161-residue protein sequence, read N- to C-terminus: Transcriptional repressor NrdR (161 aa).

Over residues 1–11 (MRCPSCSSLDT) the composition is skewed to polar residues. Positions 1–20 (MRCPSCSSLDTQVKDSRPTE) are disordered. Residues 3-34 (CPSCSSLDTQVKDSRPTEDSAVIRRRRVCMAC) fold into a zinc finger. Positions 49-139 (LTVIKRNGRR…VYRNFREAKD (91 aa)) constitute an ATP-cone domain.

Belongs to the NrdR family. Requires Zn(2+) as cofactor.

Functionally, negatively regulates transcription of bacterial ribonucleotide reductase nrd genes and operons by binding to NrdR-boxes. The protein is Transcriptional repressor NrdR of Rhodopseudomonas palustris (strain BisB18).